A 341-amino-acid chain; its full sequence is Phosphoribosylformylglycinamidine cyclo-ligase (341 aa).

It belongs to the AIR synthase family.

The protein localises to the cytoplasm. It carries out the reaction 2-formamido-N(1)-(5-O-phospho-beta-D-ribosyl)acetamidine + ATP = 5-amino-1-(5-phospho-beta-D-ribosyl)imidazole + ADP + phosphate + H(+). The protein operates within purine metabolism; IMP biosynthesis via de novo pathway; 5-amino-1-(5-phospho-D-ribosyl)imidazole from N(2)-formyl-N(1)-(5-phospho-D-ribosyl)glycinamide: step 2/2. This chain is Phosphoribosylformylglycinamidine cyclo-ligase, found in Synechocystis sp. (strain ATCC 27184 / PCC 6803 / Kazusa).